Here is a 422-residue protein sequence, read N- to C-terminus: Protein IQ-DOMAIN 5 (422 aa).

The Nuclear localization signal motif lies at 23-30; it reads SKKDENVK. IQ domains lie at 87-115, 116-138, and 139-164; these read ENRAATRIQTAYRGFLARRALRALKGLVR, LQALVRGHAVRKQAAVTLRCMQA, and LVRVQARVRARRVRLALELESETSQQ. Residues 137 to 151 form a calmodulin-binding region; that stretch reads QALVRVQARVRARRV. A disordered region spans residues 269-422; the sequence is GENGMEQSEN…NSDPIKQRLA (154 aa). Positions 273–308 are enriched in polar residues; it reads MEQSENVPKTQIKSVSKMPNTSNLVSGVSSQMTGPC. Positions 310–327 are enriched in low complexity; sequence SDGDSSSPGISSSIPVVS. A compositionally biased stretch (basic and acidic residues) spans 355-371; the sequence is NPKERSREPNRSSKERL. Residues 373–387 are compositionally biased toward polar residues; it reads LPNSGKSLGSQSTKA. Residues 412–422 are compositionally biased toward basic and acidic residues; that stretch reads RNSDPIKQRLA.

It belongs to the IQD family. In terms of assembly, binds to multiple calmodulin (CaM) in the presence of Ca(2+) and CaM-like proteins. Expressed mostly in vegetative tissues including older parts of the root, cotyledons, leaves and shoot apical meristems (SAM). Present at low levels in pollen, siliques and seeds.

Its subcellular location is the nucleus. It is found in the cytoplasm. The protein localises to the cytoskeleton. The protein resides in the spindle. It localises to the phragmoplast. May be involved in cooperative interactions with calmodulins or calmodulin-like proteins. Recruits calmodulin (CaM) calcium sensor proteins to cortical microtubule arrays, thus being a potential scaffold in cellular signaling and trafficking. Binds to microtubules (MTs) and promotes MT assembly and dynamics to modulate pavement cell (PC) morphogenesis via cellulose deposition-dependent anisotropic cell expansion triggered by cellulose synthase complexes (CSCs). May associate with nucleic acids and regulate gene expression at the transcriptional or post-transcriptional level. The chain is Protein IQ-DOMAIN 5 from Arabidopsis thaliana (Mouse-ear cress).